The chain runs to 842 residues: Putative G-type lectin S-receptor-like serine/threonine-protein kinase At1g61610 (842 aa).

The signal sequence occupies residues 1–22 (MAGFNRNLTLVTTLLIFHQLCS). 9 N-linked (GlcNAc...) asparagine glycosylation sites follow: Asn7, Asn23, Asn35, Asn60, Asn110, Asn123, Asn304, Asn351, and Asn380. Residues 23-443 (NVSCSTSNSF…KLGGGKENST (421 aa)) lie on the Extracellular side of the membrane. The Bulb-type lectin domain occupies 29–150 (SNSFTRNHTI…SDRRKWYWES (122 aa)). The 40-residue stretch at 292–331 (PSTECEKYNRCGNYSVCDDSKEFDSGKCSCIDGFEPVHQD) folds into the EGF-like domain. Intrachain disulfides connect Cys296-Cys308 and Cys302-Cys319. In terms of domain architecture, PAN spans 350–431 (CNQSLVAGQE…GGNSINIRLA (82 aa)). 2 disulfide bridges follow: Cys385–Cys406 and Cys389–Cys395. Residue Asn441 is glycosylated (N-linked (GlcNAc...) asparagine). Residues 444–464 (LWIIVFSVIGAFLLGLCIWIL) traverse the membrane as a helical segment. Topologically, residues 465-842 (WKFKKSLKAF…DVTFTTIVGR (378 aa)) are cytoplasmic. The Protein kinase domain occupies 525–814 (FAEENKLGQG…PRQPTFHSFL (290 aa)). ATP-binding positions include 531 to 539 (LGQGGFGTV) and Lys553. Ser559 carries the phosphoserine modification. The segment at 614–631 (SKQGSLDWRKRWEVIGGI) is caM-binding. Catalysis depends on Asp650, which acts as the Proton acceptor. Residues Ser654 and Ser667 each carry the phosphoserine modification. The residue at position 684 (Thr684) is a Phosphothreonine. Phosphoserine occurs at positions 728 and 830. At Thr837 the chain carries Phosphothreonine.

Belongs to the protein kinase superfamily. Ser/Thr protein kinase family.

It localises to the cell membrane. The enzyme catalyses L-seryl-[protein] + ATP = O-phospho-L-seryl-[protein] + ADP + H(+). It carries out the reaction L-threonyl-[protein] + ATP = O-phospho-L-threonyl-[protein] + ADP + H(+). This chain is Putative G-type lectin S-receptor-like serine/threonine-protein kinase At1g61610, found in Arabidopsis thaliana (Mouse-ear cress).